We begin with the raw amino-acid sequence, 520 residues long: Laccase-4 (520 aa).

A signal peptide spans 1 to 18 (MGRFSSLCALTAVIHSFG). 3 consecutive Plastocyanin-like domains span residues 24–149 (IGPV…MVVY), 161–303 (VDDE…ILRY), and 370–491 (TVPV…FSED). N-linked (GlcNAc...) asparagine glycans are attached at residues Asn-73 and Asn-76. Cu cation is bound by residues His-86, His-88, His-131, and His-133. Cystine bridges form between Cys-107–Cys-509 and Cys-139–Cys-227. 2 N-linked (GlcNAc...) asparagine glycosylation sites follow: Asn-239 and Asn-399. Cu cation-binding residues include His-418, His-421, His-423, His-473, Cys-474, His-475, and His-479. N-linked (GlcNAc...) asparagine glycosylation is present at Asn-497.

This sequence belongs to the multicopper oxidase family. Homodimer. Cu cation serves as cofactor.

The protein localises to the secreted. The enzyme catalyses 4 hydroquinone + O2 = 4 benzosemiquinone + 2 H2O. Functionally, lignin degradation and detoxification of lignin-derived products. The sequence is that of Laccase-4 (LCC4) from Trametes villosa (White-rot fungus).